The following is a 172-amino-acid chain: Phosphopantetheine adenylyltransferase (172 aa).

Position 13 (T13) interacts with substrate. ATP-binding positions include 13 to 14 and H21; that span reads TF. Residues K45, L81, and R95 each coordinate substrate. ATP is bound by residues 96–98, E106, and 131–137; these read GLR and SQFISSR.

The protein belongs to the bacterial CoaD family. Homohexamer. The cofactor is Mg(2+).

Its subcellular location is the cytoplasm. The catalysed reaction is (R)-4'-phosphopantetheine + ATP + H(+) = 3'-dephospho-CoA + diphosphate. It functions in the pathway cofactor biosynthesis; coenzyme A biosynthesis; CoA from (R)-pantothenate: step 4/5. Its function is as follows. Reversibly transfers an adenylyl group from ATP to 4'-phosphopantetheine, yielding dephospho-CoA (dPCoA) and pyrophosphate. The chain is Phosphopantetheine adenylyltransferase from Rhodospirillum rubrum (strain ATCC 11170 / ATH 1.1.1 / DSM 467 / LMG 4362 / NCIMB 8255 / S1).